The chain runs to 123 residues: Large ribosomal subunit protein bL12 (123 aa).

The protein belongs to the bacterial ribosomal protein bL12 family. In terms of assembly, homodimer. Part of the ribosomal stalk of the 50S ribosomal subunit. Forms a multimeric L10(L12)X complex, where L10 forms an elongated spine to which 2 to 4 L12 dimers bind in a sequential fashion. Binds GTP-bound translation factors.

In terms of biological role, forms part of the ribosomal stalk which helps the ribosome interact with GTP-bound translation factors. Is thus essential for accurate translation. The chain is Large ribosomal subunit protein bL12 from Clostridium acetobutylicum (strain ATCC 824 / DSM 792 / JCM 1419 / IAM 19013 / LMG 5710 / NBRC 13948 / NRRL B-527 / VKM B-1787 / 2291 / W).